The primary structure comprises 261 residues: Antiviral protein S (261 aa).

2 disulfide bridges follow: Cys-34-Cys-258 and Cys-84-Cys-105. The active site involves Glu-175.

This sequence belongs to the ribosome-inactivating protein family. Type 1 RIP subfamily.

It carries out the reaction Endohydrolysis of the N-glycosidic bond at one specific adenosine on the 28S rRNA.. Inhibits viral infection of plants, and protein synthesis in vitro. In Phytolacca americana (American pokeweed), this protein is Antiviral protein S.